We begin with the raw amino-acid sequence, 314 residues long: Olfactory receptor 1E1 (314 aa).

Over 1 to 25 (MMGQNQTSISDFLLLGLPIQPEQQN) the chain is Extracellular. Residue asparagine 5 is glycosylated (N-linked (GlcNAc...) asparagine). A helical transmembrane segment spans residues 26–49 (LCYALFLAMYLTTLLGNLLIIVLI). Topologically, residues 50–57 (RLDSHLHT) are cytoplasmic. The helical transmembrane segment at 58 to 79 (PMYLFLSNLSFSDLCFSSVTIP) threads the bilayer. The Extracellular portion of the chain corresponds to 80-100 (KLLQNMQNQDPSIPYADCLTQ). Cysteines 97 and 189 form a disulfide. A helical transmembrane segment spans residues 101–120 (MYFFLLFGDLESFLLVAMAY). Topologically, residues 121–139 (DRYVAICFALHYTAIMSPM) are cytoplasmic. The chain crosses the membrane as a helical span at residues 140 to 158 (LCLSLVALSWVLTTFHAML). Topologically, residues 159 to 195 (HTLLMARLCFCADNVIPHFFCDMSALLKLACSDTRVN) are extracellular. The chain crosses the membrane as a helical span at residues 196–219 (EWVIFIMGGLIVVIPFLLILGSYA). Residues 220–236 (RIVSSILKVPSSKGICK) are Cytoplasmic-facing. Residues 237 to 259 (AFSTCGSHLSVVSLFYGTVIGLY) form a helical membrane-spanning segment. Over 260 to 272 (LCPSANSSTLKET) the chain is Extracellular. The chain crosses the membrane as a helical span at residues 273 to 292 (VMAMMYTVVTPMLNPFIYSL). The Cytoplasmic portion of the chain corresponds to 293–314 (RNGDMKGALSRVIHQKKTFFSL).

The protein belongs to the G-protein coupled receptor 1 family.

The protein localises to the cell membrane. Functionally, odorant receptor. The sequence is that of Olfactory receptor 1E1 (OR1E1) from Gorilla gorilla gorilla (Western lowland gorilla).